A 177-amino-acid chain; its full sequence is Probable DNA-directed RNA polymerase subunit delta (177 aa).

Residues 14 to 83 (LSMIEVARAI…GENKWGLRSW (70 aa)) enclose the HTH HARE-type domain. Composition is skewed to acidic residues over residues 117–134 (GDDD…DEDN) and 142–157 (EYDD…EVES). Residues 117 to 164 (GDDDAIDYGHDDPEDEDNYPGSVSSEYDDENPDDEKDEVESYDQKSTK) are disordered.

This sequence belongs to the RpoE family. RNAP is composed of a core of 2 alpha, a beta and a beta' subunits. The core is associated with a delta subunit and one of several sigma factors.

In terms of biological role, participates in both the initiation and recycling phases of transcription. In the presence of the delta subunit, RNAP displays an increased specificity of transcription, a decreased affinity for nucleic acids, and an increased efficiency of RNA synthesis because of enhanced recycling. This Streptococcus suis (strain 98HAH33) protein is Probable DNA-directed RNA polymerase subunit delta.